The chain runs to 220 residues: CRIB domain-containing protein RIC3 (220 aa).

A CRIB domain is found at 28–41 (IGFPTDVKHVAHIG). Positions 39–220 (HIGSDGPATN…CNDNNISDKE (182 aa)) are disordered. A compositionally biased stretch (polar residues) spans 61 to 77 (NENGQVVSRADANNNQI). Low complexity predominate over residues 108–121 (NGSPPRRNSSASAS). 2 stretches are compositionally biased toward basic residues: residues 127–136 (NTRRHHRSRH) and 172–184 (HSRK…RKPK). Over residues 209-220 (DTCNDNNISDKE) the composition is skewed to polar residues.

Interacts with ARAC11/ROP1. As to expression, expressed in flowers and pollen.

The protein resides in the cytoplasm. Its function is as follows. Functions as a downstream effector of Rho-related GTP binding proteins of the 'Rho of Plants' (ROPs) family. Participates in the propagation of ROP GTPase signals in specific cellular responses. Functions as a downstream effector of ARAC11/ROP1 to activate calcium signaling that leads to F-actin disassembly associated with exocytosis in the tip of the growing pollen tube. Counteracts the ARAC11/ROP1-RIC4 pathway, which promotes apical F-actin assembly associated with vesicle accumulation, to control actin dynamics and pollen tube apical growth. This Arabidopsis thaliana (Mouse-ear cress) protein is CRIB domain-containing protein RIC3 (RIC3).